The primary structure comprises 124 residues: Peptidyl-tRNA hydrolase (124 aa).

It belongs to the PTH2 family.

The protein localises to the cytoplasm. It catalyses the reaction an N-acyl-L-alpha-aminoacyl-tRNA + H2O = an N-acyl-L-amino acid + a tRNA + H(+). Functionally, the natural substrate for this enzyme may be peptidyl-tRNAs which drop off the ribosome during protein synthesis. This chain is Peptidyl-tRNA hydrolase, found in Aeropyrum pernix (strain ATCC 700893 / DSM 11879 / JCM 9820 / NBRC 100138 / K1).